Here is a 147-residue protein sequence, read N- to C-terminus: D-aminoacyl-tRNA deacylase (147 aa).

Residues 137 to 138 carry the Gly-cisPro motif, important for rejection of L-amino acids motif; it reads GP.

The protein belongs to the DTD family. Homodimer.

It is found in the cytoplasm. It carries out the reaction glycyl-tRNA(Ala) + H2O = tRNA(Ala) + glycine + H(+). The enzyme catalyses a D-aminoacyl-tRNA + H2O = a tRNA + a D-alpha-amino acid + H(+). In terms of biological role, an aminoacyl-tRNA editing enzyme that deacylates mischarged D-aminoacyl-tRNAs. Also deacylates mischarged glycyl-tRNA(Ala), protecting cells against glycine mischarging by AlaRS. Acts via tRNA-based rather than protein-based catalysis; rejects L-amino acids rather than detecting D-amino acids in the active site. By recycling D-aminoacyl-tRNA to D-amino acids and free tRNA molecules, this enzyme counteracts the toxicity associated with the formation of D-aminoacyl-tRNA entities in vivo and helps enforce protein L-homochirality. This is D-aminoacyl-tRNA deacylase from Bacillus velezensis (strain DSM 23117 / BGSC 10A6 / LMG 26770 / FZB42) (Bacillus amyloliquefaciens subsp. plantarum).